The chain runs to 61 residues: Disintegrin rubistatin (61 aa).

The Disintegrin domain maps to 1–61 (NPCCDAATCK…ADCPRNGLYG (61 aa)). 4 cysteine pairs are disulfide-bonded: Cys-3/Cys-26, Cys-17/Cys-23, Cys-22/Cys-47, and Cys-35/Cys-54. A Cell attachment site; atypical (MVD) motif is present at residues 39 to 41 (MVD).

It belongs to the venom metalloproteinase (M12B) family. P-II subfamily. P-IIa sub-subfamily. Monomer. As to expression, expressed by the venom gland.

Its subcellular location is the secreted. Recombinant disintegrin rubistatin inhibits ADP-induced platelet aggregation. In addition, it strongly induces apoptosis, and inhibits cell migration and proliferation of the human cancer cell line SK-Mel-28. The polypeptide is Disintegrin rubistatin (Crotalus ruber ruber (Red diamond rattlesnake)).